Consider the following 308-residue polypeptide: Ribonuclease HIII (308 aa).

The RNase H type-2 domain maps to 91 to 308 (KNVIGSDEVG…TEKALKMVKK (218 aa)). The a divalent metal cation site is built by Asp97, Glu98, and Asp202.

This sequence belongs to the RNase HII family. RnhC subfamily. Mn(2+) serves as cofactor. Requires Mg(2+) as cofactor.

The protein localises to the cytoplasm. The catalysed reaction is Endonucleolytic cleavage to 5'-phosphomonoester.. Functionally, endonuclease that specifically degrades the RNA of RNA-DNA hybrids. The protein is Ribonuclease HIII of Listeria monocytogenes serotype 4b (strain CLIP80459).